The primary structure comprises 351 residues: CCN family member 3 (351 aa).

An N-terminal signal peptide occupies residues 1-21 (MSVFLRKQCLCLGFLLLHLLN). The IGFBP N-terminal domain maps to 25 to 99 (ATLRCPSRCP…NNETGICMVP (75 aa)). 6 disulfide bridges follow: C29-C55, C33-C57, C37-C58, C44-C61, C69-C83, and C75-C96. N91 carries N-linked (GlcNAc...) asparagine glycosylation. In terms of domain architecture, VWFC spans 102–168 (DNCVFDGVIY…GECCEKWTCG (67 aa)). One can recognise a TSP type-1 domain in the interval 199 to 244 (NCIEQTTEWSACSKSCGMGLSTRVTNRNLQCEMVKQTRLCMVRPCE). C238 carries the S-palmitoyl cysteine lipid modification. Cystine bridges form between C258/C295, C275/C309, C286/C325, C289/C327, and C294/C331. One can recognise a CTCK domain in the interval 258 to 332 (CLRTKKSLKS…GTCTCHSNCP (75 aa)). A glycan (N-linked (GlcNAc...) asparagine) is linked at N274.

This sequence belongs to the CCN family. In terms of assembly, interacts with FBLN1. Interacts (via CTCK domain) with NOTCH1 (via the EGF-like repeat region). Interacts with GJA1/CX43. Interacts with ITGA5:ITGB1, ITGAV:ITGB3 and ITGAV:ITGB5. Interacts with ZDHHC22; the interaction may lead to CCN3 palmitoylation. Post-translationally, may be palmitoylated on Cys-238, which is important for extracellular secretion. Widely expressed. Highly expressed in neurons of dorsal root ganglia and dorsal horn of the spinal cord (at protein level). Expressed in astrocytes (at protein level). In cartilage, dominantly expressed in the chondrocyte territorial matrix.

The protein localises to the secreted. The protein resides in the cytoplasm. It is found in the cell junction. It localises to the gap junction. In terms of biological role, immediate-early protein playing a role in various cellular processes including proliferation, adhesion, migration, differentiation and survival. Acts by binding to integrins or membrane receptors such as NOTCH1. Essential regulator of hematopoietic stem and progenitor cell function. Inhibits myogenic differentiation through the activation of Notch-signaling pathway. Inhibits vascular smooth muscle cells proliferation by increasing expression of cell-cycle regulators such as CDKN2B or CDKN1A independently of TGFB1 signaling. Ligand of integrins ITGAV:ITGB3 and ITGA5:ITGB1, acts directly upon endothelial cells to stimulate pro-angiogenic activities and induces angiogenesis. In endothelial cells, supports cell adhesion, induces directed cell migration (chemotaxis) and promotes cell survival. Also plays a role in cutaneous wound healing acting as integrin receptor ligand. Supports skin fibroblast adhesion through ITGA5:ITGB1 and ITGA6:ITGB1 and induces fibroblast chemotaxis through ITGAV:ITGB5. Seems to enhance bFGF-induced DNA synthesis in fibroblasts. Involved in bone regeneration as a negative regulator. Enhances the articular chondrocytic phenotype, whereas it repressed the one representing endochondral ossification. Impairs pancreatic beta-cell function, inhibits beta-cell proliferation and insulin secretion. Plays a role as negative regulator of endothelial pro-inflammatory activation reducing monocyte adhesion, its anti-inflammatory effects occur secondary to the inhibition of NF-kappaB signaling pathway. Contributes to the control and coordination of inflammatory processes in atherosclerosis. Attenuates inflammatory pain through regulation of IL1B- and TNF-induced MMP9, MMP2 and CCL2 expression. Inhibits MMP9 expression through ITGB1 engagement. Brain osteoanabolic hormone. During lactation, maintains the maternal skeleton and viability of offspring. This chain is CCN family member 3 (Ccn3), found in Rattus norvegicus (Rat).